The following is a 98-amino-acid chain: NADH-ubiquinone oxidoreductase chain 4L (98 aa).

3 helical membrane passes run 1–21 (MMPI…GALV), 28–48 (STLL…ALLI), and 59–79 (APLI…ALLV).

This sequence belongs to the complex I subunit 4L family. As to quaternary structure, core subunit of respiratory chain NADH dehydrogenase (Complex I) which is composed of 45 different subunits.

It is found in the mitochondrion inner membrane. The catalysed reaction is a ubiquinone + NADH + 5 H(+)(in) = a ubiquinol + NAD(+) + 4 H(+)(out). In terms of biological role, core subunit of the mitochondrial membrane respiratory chain NADH dehydrogenase (Complex I) which catalyzes electron transfer from NADH through the respiratory chain, using ubiquinone as an electron acceptor. Part of the enzyme membrane arm which is embedded in the lipid bilayer and involved in proton translocation. In Distoechurus pennatus (Feather-tailed possum), this protein is NADH-ubiquinone oxidoreductase chain 4L (MT-ND4L).